We begin with the raw amino-acid sequence, 481 residues long: MEYEAKKGKKGFVSPIRRLVFPKAARQAAFRSSVSRRPLHSMPLYPPDYLIDPHILLCDYLEKEVKFLGHLTWVTSSLNPSSRDELLQLLDTARQLKELPLKTTPEQDSILSLSARCLLLTWRDNEELILRIPTHEIAAASYLQDDALHLLVLKTGLGVDPVPAGMDGSPGGSGRDPGPPGAAPEKRRVGTAERRHTICSLDWRVAWGGGAGAEARAAGGGGSLERQRAGARASGSWERRQTFSGSWERRHAGGGAGKPGGSWERRQASGGVGGSWERRHPGPNPLDPQNHSPDAYCNLVILAVANRDAAEESCALICQVFQIIYGDQSIECVDRAGYHYRSTPKRPWLSSCTMAPRTHLKRATVAHPHRLSTAPTAAVSTTAAGPSSSYRITWSRCGVSWVLLRSSSLHCCYETIVWGCLSRTTVQVCRNSMGTDGSSFSLECGPSSQIRTSATSRASWRVWVSARAESSLTALAASSAA.

Disordered stretches follow at residues 161–193 (PVPAGMDGSPGGSGRDPGPPGAAPEKRRVGTAE) and 214–290 (EARA…DPQN). Residues 184–193 (PEKRRVGTAE) are compositionally biased toward basic and acidic residues. Positions 214-223 (EARAAGGGGS) are enriched in gly residues. The span at 237 to 251 (WERRQTFSGSWERRH) shows a compositional bias: basic and acidic residues.

The protein belongs to the CCM2 family.

This chain is Cerebral cavernous malformations 2 protein-like (Ccm2l), found in Mus musculus (Mouse).